The following is a 652-amino-acid chain: Chaperone protein HtpG (652 aa).

Positions 1–351 (MTEHVEQLEF…AQDLSLNVSR (351 aa)) are a; substrate-binding. The tract at residues 352-568 (EILQQDRQIQ…VFDFTPMLER (217 aa)) is b. Residues 569-652 (MYRASGQPVP…ILTDRLTRTL (84 aa)) form a c region.

Belongs to the heat shock protein 90 family. In terms of assembly, homodimer.

It localises to the cytoplasm. In terms of biological role, molecular chaperone. Has ATPase activity. This is Chaperone protein HtpG from Nocardia farcinica (strain IFM 10152).